The following is a 433-amino-acid chain: Phosphoglycerate kinase, chloroplastic (433 aa).

The transit peptide at G1–S28 directs the protein to the chloroplast. (2R)-3-phosphoglycerate contacts are provided by A51, D52, N54, R68, S90, H91, G93, R94, R149, H181, and R182. Position 227 (G227) interacts with ADP. G227 is a binding site for CDP. 2 residues coordinate AMP: K229 and K233. ATP is bound at residue K233. Position 251 (G251) interacts with ADP. G251 contacts CDP. AMP contacts are provided by G252 and G324. The ATP site is built by G252 and G324. CDP contacts are provided by G349 and F354. F354 serves as a coordination point for ADP. Residue E355 coordinates AMP. 3 residues coordinate ATP: E355, D386, and S387. D386 is a binding site for Mg(2+).

It belongs to the phosphoglycerate kinase family. In terms of assembly, monomer. The cofactor is Mg(2+).

It localises to the plastid. It is found in the chloroplast. It catalyses the reaction (2R)-3-phosphoglycerate + ATP = (2R)-3-phospho-glyceroyl phosphate + ADP. The protein operates within carbohydrate biosynthesis; Calvin cycle. The chain is Phosphoglycerate kinase, chloroplastic from Spinacia oleracea (Spinach).